Reading from the N-terminus, the 1004-residue chain is Kinesin-like protein KIN-7I (1004 aa).

One can recognise a Kinesin motor domain in the interval 6 to 326 (KILVSVRVRP…LLFATCAKEV (321 aa)). 89 to 96 (GQTSSGKT) is a binding site for ATP. Coiled coils occupy residues 335-402 (VVSE…AQSR), 517-576 (KKEY…QKQS), and 634-661 (SVEKEDTKKNLSSKKEDLKQNLSMDQSE). Disordered stretches follow at residues 567–599 (EQSVEKQKQSPKKEEMEQYLSRDMSEQVTKSLP), 628–671 (SQQT…PEDE), and 802–830 (TMQHHSTHSDDTDTKTMKPENTDDGGEKT). 2 stretches are compositionally biased toward basic and acidic residues: residues 569-582 (SVEKQKQSPKKEEM) and 634-652 (SVEKEDTKKNLSSKKEDLK). A compositionally biased stretch (polar residues) spans 653–663 (QNLSMDQSEQL). A Glycyl lysine isopeptide (Lys-Gly) (interchain with G-Cter in ubiquitin) cross-link involves residue Lys-881.

This sequence belongs to the TRAFAC class myosin-kinesin ATPase superfamily. Kinesin family. KIN-7 subfamily.

In Arabidopsis thaliana (Mouse-ear cress), this protein is Kinesin-like protein KIN-7I.